The primary structure comprises 299 residues: Adenylate kinase (299 aa).

A disordered region spans residues 1–30; sequence MATTTTRGARDSPFPAPSEGEIKKELNMKG. 85-90 serves as a coordination point for ATP; that stretch reads GAGKGT. Residues 107–136 form an NMP region; that stretch reads ATGDMLREQVSKQTELGKMAKKIMDQGGLV. AMP is bound by residues Thr108, Arg113, 134–136, 163–166, and Gln170; these read GLV and GFPR. The tract at residues 204-241 is LID; that stretch reads GRLVHPASGRSYHKEFSPPKKPMTDDVTGEPLIQRSDD. ATP contacts are provided by residues Arg205 and 214 to 215; that span reads SY. The disordered stretch occupies residues 212–237; that stretch reads GRSYHKEFSPPKKPMTDDVTGEPLIQ. Residues 215-227 show a composition bias toward basic and acidic residues; that stretch reads YHKEFSPPKKPMT. Residues Arg238 and Arg249 each contribute to the AMP site. Residue Gln277 participates in ATP binding.

This sequence belongs to the adenylate kinase family. AK2 subfamily. In terms of assembly, monomer.

The protein localises to the cytoplasm. Its subcellular location is the cytosol. It is found in the mitochondrion intermembrane space. It catalyses the reaction AMP + ATP = 2 ADP. In terms of biological role, catalyzes the reversible transfer of the terminal phosphate group between ATP and AMP. Plays an important role in cellular energy homeostasis and in adenine nucleotide metabolism. Adenylate kinase activity is critical for regulation of the phosphate utilization and the AMP de novo biosynthesis pathways. In Mycosarcoma maydis (Corn smut fungus), this protein is Adenylate kinase.